Consider the following 175-residue polypeptide: Small ribosomal subunit protein uS5 (175 aa).

Positions 19–82 constitute an S5 DRBM domain; sequence WVDRLVSVNR…DDAKKNVIRV (64 aa).

The protein belongs to the universal ribosomal protein uS5 family. In terms of assembly, part of the 30S ribosomal subunit. Contacts proteins S4 and S8.

With S4 and S12 plays an important role in translational accuracy. Functionally, located at the back of the 30S subunit body where it stabilizes the conformation of the head with respect to the body. The chain is Small ribosomal subunit protein uS5 from Salinibacter ruber (strain DSM 13855 / M31).